A 339-amino-acid chain; its full sequence is Ectoine/5-hydroxyectoine-binding periplasmic protein UehA (339 aa).

Positions 1–20 (MAQSITFTFGAVAAAGIALA) are cleaved as a signal peptide. Residues E36, R171, N211, F215, and F236 each contribute to the L-ectoine site. C162 and C303 are disulfide-bonded.

Belongs to the bacterial solute-binding protein 7 family. As to quaternary structure, monomer. The complex comprises the extracytoplasmic solute receptor protein UehA, and the two transmembrane proteins UehB and UehC.

The protein localises to the periplasm. In terms of biological role, part of the tripartite ATP-independent periplasmic (TRAP) transport system UehABC, which imports both ectoine and 5-hydroxyectoine as nutrients, and not as osmoprotectants. UehA binds both ectoine and 5-hydroxyectoine with high specificity and affinity. This Ruegeria pomeroyi (strain ATCC 700808 / DSM 15171 / DSS-3) (Silicibacter pomeroyi) protein is Ectoine/5-hydroxyectoine-binding periplasmic protein UehA.